The following is a 219-amino-acid chain: Ras-related protein Rab-3B (219 aa).

Residue Ala2 is modified to N-acetylalanine. Residues Ser31, Ser32, Val33, Gly34, Lys35, Thr36, Ser37, Pro49, and Ser53 each contribute to the GTP site. Thr36 is a Mg(2+) binding site. The Switch 1 signature appears at 45 to 58 (DTFTPAFVSTVGID). The Mg(2+) site is built by Thr54 and Asp77. Positions 78 to 96 (TAGQERYRTITTAYYRGAM) match the Switch 2 motif. A GTP-binding site is contributed by Gly80. Thr86 bears the Phosphothreonine mark. The GTP site is built by Asn135, Lys136, Asp138, Ala166, and Lys167. Ser188 is modified (phosphoserine). S-geranylgeranyl cysteine attachment occurs at residues Cys217 and Cys219. Cys219 carries the cysteine methyl ester modification.

It belongs to the small GTPase superfamily. Rab family. As to quaternary structure, interacts with RIMS1, RIMS2, RPH3A and RPH3AL. The GTP-bound form interacts with GAS8/DRC4 (via coiled-coil domains). Interacts with GDI2, CHM and CHML; phosphorylation at Thr-86 disrupts these interactions. Interacts with MADD (via uDENN domain); the GTP-bound form is preferred for interaction. The cofactor is Mg(2+). Post-translationally, phosphorylation of Thr-86 in the switch II region by LRRK2 prevents the association of RAB regulatory proteins, including CHM, CHML and RAB GDP dissociation inhibitor GDI2.

The protein resides in the cell membrane. It is found in the golgi apparatus. It catalyses the reaction GTP + H2O = GDP + phosphate + H(+). With respect to regulation, regulated by guanine nucleotide exchange factors (GEFs) which promote the exchange of bound GDP for free GTP. Regulated by GTPase activating proteins (GAPs) which increase the GTP hydrolysis activity. Inhibited by GDP dissociation inhibitors (GDIs) which prevent Rab-GDP dissociation. The small GTPases Rab are key regulators of intracellular membrane trafficking, from the formation of transport vesicles to their fusion with membranes. Rabs cycle between an inactive GDP-bound form and an active GTP-bound form that is able to recruit to membranes different sets of downstream effectors directly responsible for vesicle formation, movement, tethering and fusion. This Bos taurus (Bovine) protein is Ras-related protein Rab-3B (RAB3B).